Consider the following 303-residue polypeptide: N-acetyl-D-glucosamine kinase (303 aa).

ATP is bound by residues 4-11 (GFDVGGTK) and 133-140 (GFGGGLIF). H157, C177, C179, and C184 together coordinate Zn(2+).

The protein belongs to the ROK (NagC/XylR) family. NagK subfamily.

It catalyses the reaction N-acetyl-D-glucosamine + ATP = N-acetyl-D-glucosamine 6-phosphate + ADP + H(+). It functions in the pathway cell wall biogenesis; peptidoglycan recycling. Its function is as follows. Catalyzes the phosphorylation of N-acetyl-D-glucosamine (GlcNAc) derived from cell-wall degradation, yielding GlcNAc-6-P. The polypeptide is N-acetyl-D-glucosamine kinase (Aliivibrio fischeri (strain ATCC 700601 / ES114) (Vibrio fischeri)).